Consider the following 45-residue polypeptide: Large ribosomal subunit protein bL36 (45 aa).

The tract at residues M1–K45 is disordered.

It belongs to the bacterial ribosomal protein bL36 family.

This Chlamydia caviae (strain ATCC VR-813 / DSM 19441 / 03DC25 / GPIC) (Chlamydophila caviae) protein is Large ribosomal subunit protein bL36.